Consider the following 231-residue polypeptide: LexA repressor (231 aa).

A DNA-binding region (H-T-H motif) is located at residues 26–46; the sequence is FEEMKEALDLKSKSGIHRLIG. Residues Ser152 and Lys190 each act as for autocatalytic cleavage activity in the active site.

Belongs to the peptidase S24 family. Homodimer.

It carries out the reaction Hydrolysis of Ala-|-Gly bond in repressor LexA.. In terms of biological role, represses a number of genes involved in the response to DNA damage (SOS response), including recA and lexA. In the presence of single-stranded DNA, RecA interacts with LexA causing an autocatalytic cleavage which disrupts the DNA-binding part of LexA, leading to derepression of the SOS regulon and eventually DNA repair. In Acidiphilium cryptum (strain JF-5), this protein is LexA repressor.